We begin with the raw amino-acid sequence, 383 residues long: ATP phosphoribosyltransferase regulatory subunit (383 aa).

Belongs to the class-II aminoacyl-tRNA synthetase family. HisZ subfamily. As to quaternary structure, heteromultimer composed of HisG and HisZ subunits.

It localises to the cytoplasm. The protein operates within amino-acid biosynthesis; L-histidine biosynthesis; L-histidine from 5-phospho-alpha-D-ribose 1-diphosphate: step 1/9. In terms of biological role, required for the first step of histidine biosynthesis. May allow the feedback regulation of ATP phosphoribosyltransferase activity by histidine. The chain is ATP phosphoribosyltransferase regulatory subunit from Cupriavidus pinatubonensis (strain JMP 134 / LMG 1197) (Cupriavidus necator (strain JMP 134)).